The chain runs to 188 residues: PRA1 family protein 3 (188 aa).

Position 1 is an N-acetylmethionine (M1). The Cytoplasmic segment spans residues 1–35; the sequence is MDVNIAPLRAWDDFFPGSDRFARPDFRDISKWNNR. Helical transmembrane passes span 36 to 56 and 57 to 77; these read VVSN…MMIS and IVGF…VLVF. The Cytoplasmic segment spans residues 78-93; it reads TGFVWAAHNKDVLRRM. 2 helical membrane-spanning segments follow: residues 94–114 and 115–135; these read KKRY…FLIS and MFGG…LMFI. Residues 103 to 117 are required for homodimer formation and heterodimer formation with ARL6IP1; that stretch reads MVVMLASYFLISMFG. Topologically, residues 136–188 are cytoplasmic; sequence HASLRLRNLKNKLENKMEGIGLKRTPMGIVLDALEQQEEGINRLTDYISKVKE. Residues 136–188 are targeting to endoplasmic reticulum membrane; sequence HASLRLRNLKNKLENKMEGIGLKRTPMGIVLDALEQQEEGINRLTDYISKVKE.

The protein belongs to the PRA1 family. As to quaternary structure, homodimer. Heterodimer with ARL6IP1. Forms multimers. Interacts with ARL6. Interacts with prenylated RAB1A and RAB3A. Interacts with SLC1A1/EAAC1. Interacts with RTN2 (via first transmembrane domain). Does not interact with VAMP1, VAMP2 or VAMP3.

It localises to the endoplasmic reticulum membrane. The protein resides in the cell membrane. It is found in the cytoplasm. Its subcellular location is the cytoskeleton. Its function is as follows. Regulates intracellular concentrations of taurine and glutamate. Negatively modulates SLC1A1/EAAC1 glutamate transport activity by decreasing its affinity for glutamate in a PKC activity-dependent manner. Plays a role in the retention of SLC1A1/EAAC1 in the endoplasmic reticulum. In Homo sapiens (Human), this protein is PRA1 family protein 3 (ARL6IP5).